The following is a 2113-amino-acid chain: Ninein (2113 aa).

EF-hand domains follow at residues 8-43 (QHEARLKELFDSFDTLGTGSLGQEELTDLCHVLCLE) and 42-77 (LEDVGPVLQQTLLQDNLLGRVHFDQFKEALILILSR). Ser152 carries the post-translational modification Phosphoserine. 2 EF-hand domains span residues 182–217 (WIEEKLQEVCEDLGITRDGHLNRKKLVSICEQYGLQ) and 219–252 (VDGAMLEEVFLSLDPDGTMSVEDFFYGLFKTGKS). GTP is bound at residue 245 to 252 (GLFKTGKS). The residue at position 269 (Ser269) is a Phosphoserine. 300–304 (DGMGQ) contacts GTP. The region spanning 317–352 (EGIENSQEILKALDFSLDGNINLTELTLALENELLV) is the EF-hand 5 domain. The stretch at 358–570 (HQAALASFKA…YQAQGRVLRL (213 aa)) forms a coiled coil. 420–423 (RKLD) contributes to the GTP binding site. The disordered stretch occupies residues 578–599 (EELDGHSGGIEPDQGPGSEECN). Coiled-coil stretches lie at residues 620-926 (RDLC…ESQH), 958-1008 (EQLA…STEI), 1175-1323 (EDTR…MEKV), and 1425-1806 (AALL…IDKD). An important for interaction with CEP170 region spans residues 798 to 1495 (EMETECNRRV…QDLQITCGEM (698 aa)). 2 positions are modified to phosphoserine: Ser1540 and Ser1826. Coiled-coil stretches lie at residues 1852-1910 (VQNT…KEQS) and 1971-2093 (REQF…IASL). 2 disordered regions span residues 1899–1922 (KRECEQSQKEQSPTSRKVGQMGSL) and 1988–2008 (SQHLQEELENRTSETNTPQGN). Residues 1988 to 1999 (SQHLQEELENRT) show a composition bias toward basic and acidic residues.

As to quaternary structure, homooligomer. Interacts with GSK3B/GSK3-beta via its C-terminal domain. Interacts with C14ORF166, such interaction may prevent its phosphorylation by GSK3B. Interacts with AUNIP (via N-terminus). Identified in a complex with AUNIP and AURKA. Interacts with CCDC120. Interacts (via C-terminus) with CEP250. Interacts with CEP170. Interacts (via N-terminus) with the gamma-tubulin ring complex component TUBGCP3. Interacts with gamma-tubulin. Isoform 4 does not interact with CEP170 or CEP250. In terms of processing, phosphorylated by AURKA/Aurora kinase A and PKA kinases but not CK2 or AURKB/Aurora kinase B. As to expression, widely expressed. Highly expressed in spleen, bone marrow and skin. Weakly expressed in liver and small intestine. Expressed in brain.

The protein localises to the cytoplasm. Its subcellular location is the cytoskeleton. The protein resides in the microtubule organizing center. It is found in the centrosome. It localises to the centriole. In terms of biological role, centrosomal protein required for the positioning and anchorage of the microtubule minus-end in epithelial cells. May also act as a centrosome maturation factor. May play a role in microtubule nucleation, by recruiting the gamma-tubulin ring complex to the centrosome. Overexpression does not perturb nucleation or elongation of microtubules but suppresses release of microtubules. Required for centriole organization and microtubule anchoring at the mother centriole. The polypeptide is Ninein (Mus musculus (Mouse)).